The following is a 533-amino-acid chain: MRILGIEGTAWAASAALYNTHDETIVIESDPYQPDSGGLHPREAAEHMSTALPEVISTILERAVSSGNTDAIGIDAIAFSRGPGLGPCLRVVGTAARTLTQALSVPLIGVNHMIAHLEIGRHQSGFTTPVCLNASGANAHLLGYHRRQYQVLGETMDTGVGNAIDKFTRHLGWNHPGGPKVEAAATDGSYHDLPYVVKGMDFSFSGIMSAAKDAVDNEVPVVDVCTGLQETIFAMLTEVAERALSLTGSNELVLGGGVGQNDRLREMLSTMCTARGASFYAPESRFLRDNAGMIAVLGAAMYEAGQTISVNDSAVDPTFRPDAVTVTWRDDETSVTRTPATLDKTPVRGAEAIVRRINDHVVKRRVEKSYRHPKLDRRLRAERTRAEARLTSAARRLGVPTPLIFDADPETGTLVFEYVGETDLAADLTVSRCHAVGQHLGRIHNAGFVHGDPTTRNVRVDSAQNYLIDFGLGYHTDHVEDHAMDLHVFIQSVTGTASDPAPLITAFESGYAETGISTVQSRLRDIESRGRYH.

The segment at 1–328 (MRILGIEGTA…FRPDAVTVTW (328 aa)) is kae1. Fe cation contacts are provided by His-112 and His-116. Residues 133-137 (NASGA), Asp-165, Gly-178, Glu-182, and Asn-261 each bind L-threonylcarbamoyladenylate. Asp-289 contributes to the Fe cation binding site. The 195-residue stretch at 339 to 533 (PATLDKTPVR…RDIESRGRYH (195 aa)) folds into the Protein kinase domain. Residues 347–354 (VRGAEAIV) and Lys-363 contribute to the ATP site. Asp-452 (proton acceptor; for kinase activity) is an active-site residue.

In the N-terminal section; belongs to the KAE1 / TsaD family. The protein in the C-terminal section; belongs to the protein kinase superfamily. Tyr protein kinase family. BUD32 subfamily. In terms of assembly, component of the KEOPS complex that consists of Kae1, Bud32, Cgi121 and Pcc1; the whole complex dimerizes. Requires Fe(2+) as cofactor.

The protein localises to the cytoplasm. The enzyme catalyses L-seryl-[protein] + ATP = O-phospho-L-seryl-[protein] + ADP + H(+). The catalysed reaction is L-threonyl-[protein] + ATP = O-phospho-L-threonyl-[protein] + ADP + H(+). It catalyses the reaction L-threonylcarbamoyladenylate + adenosine(37) in tRNA = N(6)-L-threonylcarbamoyladenosine(37) in tRNA + AMP + H(+). Required for the formation of a threonylcarbamoyl group on adenosine at position 37 (t(6)A37) in tRNAs that read codons beginning with adenine. Is a component of the KEOPS complex that is probably involved in the transfer of the threonylcarbamoyl moiety of threonylcarbamoyl-AMP (TC-AMP) to the N6 group of A37. The Kae1 domain likely plays a direct catalytic role in this reaction. The Bud32 domain probably displays kinase activity that regulates Kae1 function. The protein is Probable bifunctional tRNA threonylcarbamoyladenosine biosynthesis protein of Haloquadratum walsbyi (strain DSM 16790 / HBSQ001).